Consider the following 457-residue polypeptide: Aromatic amino acid permease FywP (457 aa).

The next 12 membrane-spanning stretches (helical) occupy residues 16–36 (IVML…SGKV), 43–63 (SVLL…YGVG), 91–111 (FADW…EAGV), 114–134 (FLAI…VAVL), 154–174 (AFIK…LLVI), 205–225 (GFLT…LAAI), 243–263 (GVLI…LHLL), 292–312 (IVLV…IYAT), 342–362 (NAIL…AVLG), 373–393 (ISFT…VLYF), 403–423 (VKLA…MQII), and 424–444 (TNPW…YFSY).

The protein belongs to the amino acid-polyamine-organocation (APC) superfamily. Amino acid transporter (AAT) (TC 2.A.3.1) family.

It localises to the cell membrane. Functionally, involved in phenylalanine and tyrosine uptake. Also has affinity for tryptophan. Plays no significant role in the excretion of accumulated phenylalanine. The sequence is that of Aromatic amino acid permease FywP from Lactococcus lactis subsp. cremoris (strain MG1363).